The following is a 212-amino-acid chain: Ribosomal RNA small subunit methyltransferase G (212 aa).

S-adenosyl-L-methionine contacts are provided by residues glycine 80, leucine 85, 131–132, and arginine 146; that span reads AE.

This sequence belongs to the methyltransferase superfamily. RNA methyltransferase RsmG family.

Its subcellular location is the cytoplasm. The catalysed reaction is guanosine(527) in 16S rRNA + S-adenosyl-L-methionine = N(7)-methylguanosine(527) in 16S rRNA + S-adenosyl-L-homocysteine. Specifically methylates the N7 position of guanine in position 527 of 16S rRNA. In Stenotrophomonas maltophilia (strain R551-3), this protein is Ribosomal RNA small subunit methyltransferase G.